The following is a 206-amino-acid chain: Synaptosomal-associated protein 25 (206 aa).

Residues 1–20 (MAEDADMRNELEEMQRRADQ) are compositionally biased toward basic and acidic residues. Positions 1–23 (MAEDADMRNELEEMQRRADQLAD) are disordered. The t-SNARE coiled-coil homology 1 domain occupies 19-81 (DQLADESLES…KEAEKNLTDL (63 aa)). 4 S-palmitoyl cysteine lipidation sites follow: cysteine 85, cysteine 88, cysteine 90, and cysteine 92. Threonine 138 bears the Phosphothreonine mark. A t-SNARE coiled-coil homology 2 domain is found at 140–202 (DARENEMDEN…DEANQRATKM (63 aa)). Residue serine 187 is modified to Phosphoserine.

The protein belongs to the SNAP-25 family. In terms of assembly, part of the SNARE core complex containing SNAP25, VAMP2 and STX1A. This complex binds CPLX1. Interacts with TRIM9, RIMS1 and SNAPIN. Binds STXBP6. Found in a ternary complex with STX1A and VAMP8. Associates with the BLOC-1 complex. Isoform 1 and isoform 2 interact with BLOC1S6. Interacts with alpha-synuclein/SNCA. In terms of processing, palmitoylated. Cys-85 appears to be the main site, and palmitoylation is required for membrane association.

The protein resides in the membrane. Its subcellular location is the synapse. It localises to the synaptosome. It is found in the cell membrane. T-SNARE involved in the molecular regulation of neurotransmitter release. May play an important role in the synaptic function of specific neuronal systems. Associates with proteins involved in vesicle docking and membrane fusion. The protein is Synaptosomal-associated protein 25 (SNAP25) of Gallus gallus (Chicken).